A 264-amino-acid polypeptide reads, in one-letter code: Tropomyosin Cha f 1.0101 (264 aa).

N-acetylmethionine is present on methionine 1. 2 disordered regions span residues 1–56 and 92–126; these read MDAI…VENE and IQLPEEDLERSEERLNTATTKLAEASQAADESERM. Residues 1 to 264 are a coiled coil; sequence MDAIKKKMQA…RLEDELVNEK (264 aa). The span at 12–45 shows a compositional bias: basic and acidic residues; that stretch reads KLEKDNAMDRADTLEQQNKEANLRAEKTEEEIRA.

This sequence belongs to the tropomyosin family. Homodimer. Expressed in muscle (at protein level). Expressed in claw muscles.

Functionally, tropomyosin, in association with the troponin complex, plays a central role in the calcium dependent regulation of muscle contraction. The chain is Tropomyosin Cha f 1.0101 from Charybdis feriata (Crucifix crab).